Reading from the N-terminus, the 131-residue chain is Large ribosomal subunit protein bL12 (131 aa).

The protein belongs to the bacterial ribosomal protein bL12 family. In terms of assembly, homodimer. Part of the ribosomal stalk of the 50S ribosomal subunit. Forms a multimeric L10(L12)X complex, where L10 forms an elongated spine to which 2 to 4 L12 dimers bind in a sequential fashion. Binds GTP-bound translation factors.

Its function is as follows. Forms part of the ribosomal stalk which helps the ribosome interact with GTP-bound translation factors. Is thus essential for accurate translation. The polypeptide is Large ribosomal subunit protein bL12 (Prochlorococcus marinus subsp. pastoris (strain CCMP1986 / NIES-2087 / MED4)).